The chain runs to 395 residues: Argininosuccinate synthase (395 aa).

8–16 lines the ATP pocket; that stretch reads AYSGGLDTS. Y86 and S91 together coordinate L-citrulline. Position 116 (G116) interacts with ATP. Residues T118, N122, and D123 each coordinate L-aspartate. Residue N122 participates in L-citrulline binding. R126, S172, S181, E257, and Y269 together coordinate L-citrulline.

The protein belongs to the argininosuccinate synthase family. Type 1 subfamily. As to quaternary structure, homotetramer.

It localises to the cytoplasm. It carries out the reaction L-citrulline + L-aspartate + ATP = 2-(N(omega)-L-arginino)succinate + AMP + diphosphate + H(+). It participates in amino-acid biosynthesis; L-arginine biosynthesis; L-arginine from L-ornithine and carbamoyl phosphate: step 2/3. This Methanosarcina barkeri (strain Fusaro / DSM 804) protein is Argininosuccinate synthase.